The primary structure comprises 311 residues: Malate dehydrogenase (311 aa).

Residues 7 to 13 (GAAGGIG) and aspartate 34 each bind NAD(+). Residues arginine 81 and arginine 87 each coordinate substrate. NAD(+) is bound by residues asparagine 94 and 117–119 (ITN). Residues asparagine 119 and arginine 153 each contribute to the substrate site. Histidine 177 (proton acceptor) is an active-site residue. Methionine 227 serves as a coordination point for NAD(+).

It belongs to the LDH/MDH superfamily. MDH type 1 family. In terms of assembly, homodimer.

The catalysed reaction is (S)-malate + NAD(+) = oxaloacetate + NADH + H(+). Catalyzes the reversible oxidation of malate to oxaloacetate. This Shewanella sediminis (strain HAW-EB3) protein is Malate dehydrogenase.